A 233-amino-acid polypeptide reads, in one-letter code: Superoxide dismutase [Mn], mitochondrial (233 aa).

Residues 1–27 (MALRSLVTRKNLPSAFKAATGLGQLRG) constitute a mitochondrion transit peptide. Positions 55, 103, 192, and 196 each coordinate Mn(2+).

Belongs to the iron/manganese superoxide dismutase family. In terms of assembly, homotetramer. Mn(2+) serves as cofactor. In terms of tissue distribution, present in all tissues examined (leaf, petiole, root, latex, callus) with young leaves showing the highest levels in intact plants.

It is found in the mitochondrion matrix. It carries out the reaction 2 superoxide + 2 H(+) = H2O2 + O2. Its function is as follows. Destroys superoxide anion radicals which are normally produced within the cells and which are toxic to biological systems. The protein is Superoxide dismutase [Mn], mitochondrial (SODA) of Hevea brasiliensis (Para rubber tree).